The primary structure comprises 147 residues: Ribosome-binding factor A (147 aa).

The disordered stretch occupies residues 123–147; it reads LAKLKEGAQPAGDANPYKTSDEEED.

The protein belongs to the RbfA family. Monomer. Binds 30S ribosomal subunits, but not 50S ribosomal subunits or 70S ribosomes.

It localises to the cytoplasm. Its function is as follows. One of several proteins that assist in the late maturation steps of the functional core of the 30S ribosomal subunit. Associates with free 30S ribosomal subunits (but not with 30S subunits that are part of 70S ribosomes or polysomes). Required for efficient processing of 16S rRNA. May interact with the 5'-terminal helix region of 16S rRNA. This Corynebacterium aurimucosum (strain ATCC 700975 / DSM 44827 / CIP 107346 / CN-1) (Corynebacterium nigricans) protein is Ribosome-binding factor A.